A 273-amino-acid chain; its full sequence is Putative phosphoenolpyruvate synthase regulatory protein (273 aa).

ADP is bound at residue 153–160 (GVSRCGKT).

The protein belongs to the pyruvate, phosphate/water dikinase regulatory protein family. PSRP subfamily.

It carries out the reaction [pyruvate, water dikinase] + ADP = [pyruvate, water dikinase]-phosphate + AMP + H(+). It catalyses the reaction [pyruvate, water dikinase]-phosphate + phosphate + H(+) = [pyruvate, water dikinase] + diphosphate. Bifunctional serine/threonine kinase and phosphorylase involved in the regulation of the phosphoenolpyruvate synthase (PEPS) by catalyzing its phosphorylation/dephosphorylation. The polypeptide is Putative phosphoenolpyruvate synthase regulatory protein (Yersinia pseudotuberculosis serotype I (strain IP32953)).